Reading from the N-terminus, the 330-residue chain is Protoheme IX farnesyltransferase (330 aa).

Transmembrane regions (helical) follow at residues 33 to 53, 54 to 74, 101 to 121, 126 to 146, 154 to 174, 180 to 200, 227 to 247, 250 to 270, and 308 to 328; these read VMTLVVFTAFAGLIAAPVDAD, PFLAFMSILCLAVGAGAAGAL, VSNAYGFGVVASILSVLLMAL, LAAGLLAFSIFFYAVIYTMIL, IVIGGAAGAFPPMIGWVAATG, AVILFMIIFLWTPPHSWALAL, ILLYSIVLVIFAGAPVLTGLG, VYGATSLGGGALFLLLAWRIF, and VLFAALIVEHAFGAYVAIPGV.

The protein belongs to the UbiA prenyltransferase family. Protoheme IX farnesyltransferase subfamily. Interacts with CtaA.

It is found in the cell inner membrane. It catalyses the reaction heme b + (2E,6E)-farnesyl diphosphate + H2O = Fe(II)-heme o + diphosphate. Its pathway is porphyrin-containing compound metabolism; heme O biosynthesis; heme O from protoheme: step 1/1. Its function is as follows. Converts heme B (protoheme IX) to heme O by substitution of the vinyl group on carbon 2 of heme B porphyrin ring with a hydroxyethyl farnesyl side group. The sequence is that of Protoheme IX farnesyltransferase from Maricaulis maris (strain MCS10) (Caulobacter maris).